A 192-amino-acid chain; its full sequence is Elongation factor P (192 aa).

This sequence belongs to the elongation factor P family.

It is found in the cytoplasm. Its pathway is protein biosynthesis; polypeptide chain elongation. Functionally, involved in peptide bond synthesis. Stimulates efficient translation and peptide-bond synthesis on native or reconstituted 70S ribosomes in vitro. Probably functions indirectly by altering the affinity of the ribosome for aminoacyl-tRNA, thus increasing their reactivity as acceptors for peptidyl transferase. This Borreliella burgdorferi (strain ATCC 35210 / DSM 4680 / CIP 102532 / B31) (Borrelia burgdorferi) protein is Elongation factor P (efp).